The chain runs to 706 residues: DNA ligase (706 aa).

NAD(+) contacts are provided by residues 48–52 (DAAYD), 97–98 (SL), and Glu131. Lys133 functions as the N6-AMP-lysine intermediate in the catalytic mechanism. Residues Arg154, Glu191, Lys307, and Lys331 each contribute to the NAD(+) site. The Zn(2+) site is built by Cys425, Cys428, Cys443, and Cys449. The 79-residue stretch at 628–706 (RADSAVAGKT…EDEWLKLIEG (79 aa)) folds into the BRCT domain.

It belongs to the NAD-dependent DNA ligase family. LigA subfamily. It depends on Mg(2+) as a cofactor. The cofactor is Mn(2+).

It carries out the reaction NAD(+) + (deoxyribonucleotide)n-3'-hydroxyl + 5'-phospho-(deoxyribonucleotide)m = (deoxyribonucleotide)n+m + AMP + beta-nicotinamide D-nucleotide.. In terms of biological role, DNA ligase that catalyzes the formation of phosphodiester linkages between 5'-phosphoryl and 3'-hydroxyl groups in double-stranded DNA using NAD as a coenzyme and as the energy source for the reaction. It is essential for DNA replication and repair of damaged DNA. The chain is DNA ligase from Afipia carboxidovorans (strain ATCC 49405 / DSM 1227 / KCTC 32145 / OM5) (Oligotropha carboxidovorans).